The chain runs to 339 residues: 5-dehydro-2-deoxygluconokinase (339 aa).

It belongs to the carbohydrate kinase PfkB family.

It carries out the reaction 5-dehydro-2-deoxy-D-gluconate + ATP = 6-phospho-5-dehydro-2-deoxy-D-gluconate + ADP + H(+). Its pathway is polyol metabolism; myo-inositol degradation into acetyl-CoA; acetyl-CoA from myo-inositol: step 5/7. Catalyzes the phosphorylation of 5-dehydro-2-deoxy-D-gluconate (2-deoxy-5-keto-D-gluconate or DKG) to 6-phospho-5-dehydro-2-deoxy-D-gluconate (DKGP). This chain is 5-dehydro-2-deoxygluconokinase, found in Clostridium botulinum (strain Eklund 17B / Type B).